The sequence spans 248 residues: Ubiquinone/menaquinone biosynthesis C-methyltransferase UbiE (248 aa).

2 residues coordinate S-adenosyl-L-methionine: S68 and D92.

It belongs to the class I-like SAM-binding methyltransferase superfamily. MenG/UbiE family.

The catalysed reaction is a 2-demethylmenaquinol + S-adenosyl-L-methionine = a menaquinol + S-adenosyl-L-homocysteine + H(+). It carries out the reaction a 2-methoxy-6-(all-trans-polyprenyl)benzene-1,4-diol + S-adenosyl-L-methionine = a 5-methoxy-2-methyl-3-(all-trans-polyprenyl)benzene-1,4-diol + S-adenosyl-L-homocysteine + H(+). It participates in quinol/quinone metabolism; menaquinone biosynthesis; menaquinol from 1,4-dihydroxy-2-naphthoate: step 2/2. The protein operates within cofactor biosynthesis; ubiquinone biosynthesis. In terms of biological role, methyltransferase required for the conversion of demethylmenaquinol (DMKH2) to menaquinol (MKH2) and the conversion of 2-polyprenyl-6-methoxy-1,4-benzoquinol (DDMQH2) to 2-polyprenyl-3-methyl-6-methoxy-1,4-benzoquinol (DMQH2). This Rickettsia akari (strain Hartford) protein is Ubiquinone/menaquinone biosynthesis C-methyltransferase UbiE.